The primary structure comprises 207 residues: Probable GTP-binding protein EngB (207 aa).

In terms of domain architecture, EngB-type G spans 24–199; sequence GGYEVAFAGR…RGIVGGWLGL (176 aa). GTP is bound by residues 32 to 39, 59 to 63, 77 to 80, 144 to 147, and 178 to 180; these read GRSNAGKS, GRTQQ, DLPG, TKAD, and YSG. Mg(2+) is bound by residues Ser-39 and Thr-61.

It belongs to the TRAFAC class TrmE-Era-EngA-EngB-Septin-like GTPase superfamily. EngB GTPase family. Mg(2+) serves as cofactor.

In terms of biological role, necessary for normal cell division and for the maintenance of normal septation. The polypeptide is Probable GTP-binding protein EngB (Xanthomonas campestris pv. campestris (strain 8004)).